The following is an 89-amino-acid chain: MALTKEEKRQIIEKFRLNENDSGSPEVQIALLTERIKKLTEHLKVHKKDYHSRVGLLKMIGRRRKLLKYLQEKDFERYKKLIQELGLRK.

This sequence belongs to the universal ribosomal protein uS15 family. In terms of assembly, part of the 30S ribosomal subunit. Forms a bridge to the 50S subunit in the 70S ribosome, contacting the 23S rRNA.

Its function is as follows. One of the primary rRNA binding proteins, it binds directly to 16S rRNA where it helps nucleate assembly of the platform of the 30S subunit by binding and bridging several RNA helices of the 16S rRNA. Functionally, forms an intersubunit bridge (bridge B4) with the 23S rRNA of the 50S subunit in the ribosome. This chain is Small ribosomal subunit protein uS15, found in Dictyoglomus turgidum (strain DSM 6724 / Z-1310).